The following is a 233-amino-acid chain: Ycf53-like protein (233 aa).

Belongs to the ycf53 family.

In Synechocystis sp. (strain ATCC 27184 / PCC 6803 / Kazusa), this protein is Ycf53-like protein.